The following is a 250-amino-acid chain: Envelope glycoprotein L (250 aa).

The N-terminal stretch at 1 to 18 (MELLLFVMSLILLTFSKA) is a signal peptide. The 209-residue stretch at 31–239 (KLDDCIAAVI…EAYNSKLPFR (209 aa)) folds into the gL betaherpesvirus-type domain. The cysteines at positions 136 and 141 are disulfide-linked.

The protein belongs to the herpesviridae glycoprotein L (gL) family. Betaherpesvirinae gL subfamily. In terms of assembly, interacts with glycoprotein H (gH); this interaction is necessary for the correct processing and cell surface expression of gH. Part of a gH-gL-gO complex.

It localises to the virion membrane. The protein resides in the host cell membrane. It is found in the host Golgi apparatus. The protein localises to the host trans-Golgi network. The heterodimer glycoprotein H-glycoprotein L is required for the fusion of viral and plasma membranes leading to virus entry into the host cell. Acts as a functional inhibitor of gH and maintains gH in an inhibited form. Upon binding to host integrins, gL dissociates from gH leading to activation of the viral fusion glycoproteins gB and gH. This Homo sapiens (Human) protein is Envelope glycoprotein L.